Here is a 712-residue protein sequence, read N- to C-terminus: Elongation factor G (712 aa).

The region spanning 8-290 (TRYRNIGISA…AVIEFLPSPT (283 aa)) is the tr-type G domain. Residues 17–24 (AHIDAGKT), 88–92 (DTPGH), and 142–145 (NKMD) contribute to the GTP site.

It belongs to the TRAFAC class translation factor GTPase superfamily. Classic translation factor GTPase family. EF-G/EF-2 subfamily.

The protein localises to the cytoplasm. In terms of biological role, catalyzes the GTP-dependent ribosomal translocation step during translation elongation. During this step, the ribosome changes from the pre-translocational (PRE) to the post-translocational (POST) state as the newly formed A-site-bound peptidyl-tRNA and P-site-bound deacylated tRNA move to the P and E sites, respectively. Catalyzes the coordinated movement of the two tRNA molecules, the mRNA and conformational changes in the ribosome. This is Elongation factor G from Acinetobacter baumannii (strain AB0057).